The sequence spans 280 residues: Energy-coupling factor transporter ATP-binding protein EcfA2 (280 aa).

One can recognise an ABC transporter domain in the interval 3 to 245 (IEFKNVSYTY…VELLESKQLG (243 aa)). 40–47 (GHTGSGKS) is an ATP binding site.

Belongs to the ABC transporter superfamily. Energy-coupling factor EcfA family. As to quaternary structure, forms a stable energy-coupling factor (ECF) transporter complex composed of 2 membrane-embedded substrate-binding proteins (S component), 2 ATP-binding proteins (A component) and 2 transmembrane proteins (T component).

The protein localises to the cell membrane. ATP-binding (A) component of a common energy-coupling factor (ECF) ABC-transporter complex. Unlike classic ABC transporters this ECF transporter provides the energy necessary to transport a number of different substrates. The sequence is that of Energy-coupling factor transporter ATP-binding protein EcfA2 from Streptococcus agalactiae serotype Ia (strain ATCC 27591 / A909 / CDC SS700).